Reading from the N-terminus, the 517-residue chain is Maturase K (517 aa).

This sequence belongs to the intron maturase 2 family. MatK subfamily.

It localises to the plastid. The protein localises to the chloroplast. Its function is as follows. Usually encoded in the trnK tRNA gene intron. Probably assists in splicing its own and other chloroplast group II introns. In Juncus effusus (Soft rush), this protein is Maturase K.